A 232-amino-acid chain; its full sequence is tRNA (guanine-N(1)-)-methyltransferase (232 aa).

Residues G108 and 128–133 (IGDFIM) contribute to the S-adenosyl-L-methionine site.

The protein belongs to the RNA methyltransferase TrmD family. As to quaternary structure, homodimer.

It localises to the cytoplasm. It carries out the reaction guanosine(37) in tRNA + S-adenosyl-L-methionine = N(1)-methylguanosine(37) in tRNA + S-adenosyl-L-homocysteine + H(+). In terms of biological role, specifically methylates guanosine-37 in various tRNAs. The protein is tRNA (guanine-N(1)-)-methyltransferase of Campylobacter fetus subsp. fetus (strain 82-40).